The sequence spans 194 residues: DPY30 domain-containing protein 2 (194 aa).

The tract at residues 126–172 is disordered; that stretch reads EAFEKEPLKQESLPGTSDMIPGMPQQSPSSEPSVSSQVDLNTGTPQE. Over residues 149–163 the composition is skewed to low complexity; the sequence is PQQSPSSEPSVSSQV.

The protein belongs to the dpy-30 family.

The protein is DPY30 domain-containing protein 2 (DYDC2) of Bos taurus (Bovine).